The following is a 62-amino-acid chain: UPF0337 protein XAC0100 (62 aa).

It belongs to the UPF0337 (CsbD) family.

The polypeptide is UPF0337 protein XAC0100 (Xanthomonas axonopodis pv. citri (strain 306)).